The primary structure comprises 154 residues: Major allergen Api g 1, isoallergen 1 (154 aa).

This sequence belongs to the BetVI family.

This is Major allergen Api g 1, isoallergen 1 from Apium graveolens (Celery).